Here is a 286-residue protein sequence, read N- to C-terminus: Mitochondrial dicarboxylate carrier (286 aa).

3 Solcar repeats span residues 7–87, 100–187, and 196–279; these read SRWY…MRDY, SKVL…AKQL, and DNIF…LRKH. The next 3 helical transmembrane spans lie at 9-29, 62-81, and 102-122; these read WYFG…LDLL, GLSA…FAIY, and VLLG…ADLV. Lysine 158 is modified (N6-acetyllysine). Helical transmembrane passes span 162-181, 202-222, and 254-274; these read GATM…LSCY, FLSS…LDVL, and GLVP…MFLE.

The protein belongs to the mitochondrial carrier (TC 2.A.29) family. In terms of tissue distribution, expressed most strongly in liver, then kidney, and at lower levels in heart and brain.

The protein localises to the mitochondrion inner membrane. The catalysed reaction is (S)-malate(in) + phosphate(out) = (S)-malate(out) + phosphate(in). The enzyme catalyses malonate(out) + (S)-malate(in) = malonate(in) + (S)-malate(out). It catalyses the reaction (S)-malate(in) + succinate(out) = (S)-malate(out) + succinate(in). It carries out the reaction (S)-malate(in) + sulfate(out) = (S)-malate(out) + sulfate(in). The catalysed reaction is malonate(out) + phosphate(in) = malonate(in) + phosphate(out). The enzyme catalyses succinate(out) + phosphate(in) = succinate(in) + phosphate(out). It catalyses the reaction sulfate(out) + phosphate(in) = sulfate(in) + phosphate(out). It carries out the reaction malonate(out) + succinate(in) = malonate(in) + succinate(out). Catalyzes the electroneutral exchange or flux of physiologically important metabolites such as dicarboxylates (malonate, malate, succinate), inorganic sulfur-containing anions, and phosphate, across mitochondrial inner membrane. Plays an important role in gluconeogenesis, fatty acid metabolism, urea synthesis, and sulfur metabolism, particularly in liver, by supplying the substrates for the different metabolic processes. Regulates fatty acid release from adipocytes, and contributes to systemic insulin sensitivity. The protein is Mitochondrial dicarboxylate carrier of Rattus norvegicus (Rat).